The chain runs to 297 residues: Light-independent protochlorophyllide reductase iron-sulfur ATP-binding protein (297 aa).

ATP is bound by residues 41 to 46 and K70; that span reads GIGKST. Residue S45 coordinates Mg(2+). Residues C126 and C160 each contribute to the [4Fe-4S] cluster site. Residues 211–212 and 235–237 contribute to the ATP site; these read NR and PDL.

The protein belongs to the NifH/BchL/ChlL family. In terms of assembly, homodimer. Protochlorophyllide reductase is composed of three subunits; BchL, BchN and BchB. [4Fe-4S] cluster serves as cofactor.

The catalysed reaction is chlorophyllide a + oxidized 2[4Fe-4S]-[ferredoxin] + 2 ADP + 2 phosphate = protochlorophyllide a + reduced 2[4Fe-4S]-[ferredoxin] + 2 ATP + 2 H2O. It functions in the pathway porphyrin-containing compound metabolism; bacteriochlorophyll biosynthesis (light-independent). Component of the dark-operative protochlorophyllide reductase (DPOR) that uses Mg-ATP and reduced ferredoxin to reduce ring D of protochlorophyllide (Pchlide) to form chlorophyllide a (Chlide). This reaction is light-independent. The L component serves as a unique electron donor to the NB-component of the complex, and binds Mg-ATP. This Methylorubrum extorquens (strain PA1) (Methylobacterium extorquens) protein is Light-independent protochlorophyllide reductase iron-sulfur ATP-binding protein.